We begin with the raw amino-acid sequence, 588 residues long: Ribonuclease Y (588 aa).

A helical transmembrane segment spans residues 7-27 (VLLVAVLLLALIVLGAVLVGV). Positions 130–162 (ARRSGEREAAVLATTTREQAAEVERRAARMDDR) are disordered. A compositionally biased stretch (basic and acidic residues) spans 148–162 (QAAEVERRAARMDDR). Residues 278 to 359 (VVSVLHLPGD…HRIEEVHDLA (82 aa)) enclose the KH domain. The region spanning 404-497 (VLKHLVETAH…TQASDACSGG (94 aa)) is the HD domain.

It belongs to the RNase Y family.

It is found in the cell membrane. Functionally, endoribonuclease that initiates mRNA decay. In Salinispora arenicola (strain CNS-205), this protein is Ribonuclease Y.